An 858-amino-acid chain; its full sequence is Autoinducer 2 sensor kinase/phosphatase LuxQ (858 aa).

2 helical membrane-spanning segments follow: residues 14–34 (STLI…GIFV) and 362–382 (LFNF…LIQI). The region spanning 488–710 (KMSHEIRTPI…TFVVTLPVKD (223 aa)) is the Histidine kinase domain. His491 is subject to Phosphohistidine; by autocatalysis. One can recognise a Response regulatory domain in the interval 735 to 850 (KVLLVEDNHT…ALHEAFVDFK (116 aa)). Asp784 carries the post-translational modification 4-aspartylphosphate.

Binds the complex formed by the autoinducer and LuxP.

The protein localises to the cell inner membrane. The enzyme catalyses ATP + protein L-histidine = ADP + protein N-phospho-L-histidine.. At low cell density, in absence of autoinducer has a kinase activity, and autophosphorylates on a histidine residue. The phosphoryl group is then transferred to an aspartate residue in the response regulator domain. The phosphoryl group is transferred to LuxU, and ultimately to LuxO. At high cell density, in the presence of autoinducer, the kinase activity is inactivated, and the response regulator domain has a phosphatase activity. In Vibrio parahaemolyticus serotype O3:K6 (strain RIMD 2210633), this protein is Autoinducer 2 sensor kinase/phosphatase LuxQ (luxQ).